The chain runs to 145 residues: Maximins 3/H9 type 1 (145 aa).

An N-terminal signal peptide occupies residues 1–18 (MNFKYIVAVSFLIASAYA). 2 consecutive propeptides follow at residues 19–43 (RSVQ…LREI) and 74–124 (RTAE…KEKR). Ile144 carries the isoleucine amide modification.

This sequence belongs to the bombinin family. As to expression, expressed by the skin glands.

It is found in the secreted. Functionally, maximin-3 shows antibacterial activity against both Gram-positive and Gram-negative bacteria. It also shows antimicrobial activity against the fungus C.albicans, but not against A.flavus nor P.uticale. It has little hemolytic activity. It possess a significant cytotoxicity against tumor cell lines. It possess a significant anti-HIV activity. It shows high spermicidal activity. Maximin-H9 shows antimicrobial activity against bacteria and against the fungus C.albicans. Shows strong hemolytic activity. This Bombina maxima (Giant fire-bellied toad) protein is Maximins 3/H9 type 1.